Here is a 994-residue protein sequence, read N- to C-terminus: cGMP-dependent protein kinase (994 aa).

Residues 1–162 form a disordered region; sequence MGACISKNSS…QDDSHTEEEK (162 aa). Residue G2 is the site of N-myristoyl glycine attachment. C4 carries the S-palmitoyl cysteine lipid modification. Composition is skewed to low complexity over residues 9–22 and 33–46; these read SSARVSRSSALSAS and GAAGDETSATGAAE. Composition is skewed to basic and acidic residues over residues 65-80 and 133-162; these read ELERAPDGVCPDREEP and EGPKEKPGGDRKPAQKAILKQDDSHTEEEK. CNMP-binding domain stretches follow at residues 189-305, 308-407, 463-539, and 561-660; these read VCSS…FLAS, FFEM…RVLG, GIRF…ATLG, and IFRY…NEII. 3',5'-cyclic GMP-binding residues include G253, E254, A256, R263, and S264. Positions 616, 625, 626, 628, 635, and 636 each coordinate 3',5'-cyclic GMP. The Protein kinase domain occupies 684–941; the sequence is LQVVRVVGRG…YKDIKEHAFF (258 aa). ATP is bound by residues 690 to 698 and K713; that span reads VGRGTFGTV. The active-site Proton acceptor is D807. Residues 942 to 994 enclose the AGC-kinase C-terminal domain; that stretch reads GDFDWDKLAGRGLPPPLAPKGETYAEDTEQSSFELDEDDTIVLEDEYDWDKDF. The tract at residues 954-976 is disordered; the sequence is LPPPLAPKGETYAEDTEQSSFEL. Residues 965–976 show a composition bias toward acidic residues; the sequence is YAEDTEQSSFEL.

It belongs to the protein kinase superfamily. AGC Ser/Thr protein kinase family. cGMP subfamily. Requires Mg(2+) as cofactor.

It is found in the cytoplasm. The protein localises to the membrane. Its subcellular location is the cell membrane. It catalyses the reaction L-seryl-[protein] + ATP = O-phospho-L-seryl-[protein] + ADP + H(+). It carries out the reaction L-threonyl-[protein] + ATP = O-phospho-L-threonyl-[protein] + ADP + H(+). Its activity is regulated as follows. Activated by cGMP. The cGMP-binding domains acts cooperatively to activate PKG. Inhibited by the antiparasitic small molecule 4-[2-(4-fluorophenyl)-5-(1-methylpiperidine-4-yl)-1Hpyrrol- 3-yl]pyridine (compound 1). Its function is as follows. Serine/threonine protein kinase which acts as a downstream effector of the second messenger cGMP. Plays an essential role in tachyzoite invasion of and egress from host cells. During invasion of host cells, regulates the apico-basal flux of F-actin probably via Ca(2+)-mediated activation of CDPK1. In tachyzoites, required for microneme secretion. Required for tachyzoite gliding motility. Functionally, plays an essential role in parasite invasion of and egress from host cells, and microneme secretion. In terms of biological role, dispensable for parasite invasion of and egress from host cells, and microneme secretion. The sequence is that of cGMP-dependent protein kinase from Toxoplasma gondii.